Here is a 433-residue protein sequence, read N- to C-terminus: Ectonucleoside triphosphate diphosphohydrolase 5 (433 aa).

Positions 1-24 (MATTWGAAFFMLVASCVCSTVFHR) are cleaved as a signal peptide. Glu-172 serves as the catalytic Proton acceptor. A glycan (N-linked (GlcNAc...) asparagine) is linked at Asn-232. 2 cysteine pairs are disulfide-bonded: Cys-272–Cys-308 and Cys-368–Cys-382.

Belongs to the GDA1/CD39 NTPase family. Monomer; active form. Homodimer; disulfide-linked. Homodimers are enzymatically inactive. Requires Ca(2+) as cofactor. It depends on Mg(2+) as a cofactor. Post-translationally, N-glycosylated; high-mannose type.

The protein localises to the endoplasmic reticulum. Its subcellular location is the secreted. The enzyme catalyses a ribonucleoside 5'-diphosphate + H2O = a ribonucleoside 5'-phosphate + phosphate + H(+). The catalysed reaction is GDP + H2O = GMP + phosphate + H(+). It catalyses the reaction UDP + H2O = UMP + phosphate + H(+). It carries out the reaction IDP + H2O = IMP + phosphate + H(+). The enzyme catalyses CDP + H2O = CMP + phosphate + H(+). The catalysed reaction is ADP + H2O = AMP + phosphate + H(+). It participates in protein modification; protein glycosylation. Hydrolyzes nucleoside diphosphates with a preference for GDP, IDP and UDP compared to ADP and CDP. In the lumen of the endoplasmic reticulum, hydrolyzes UDP that acts as an end-product feedback inhibitor of the UDP-Glc:glycoprotein glucosyltransferases. UMP can be transported back by an UDP-sugar antiporter to the cytosol where it is consumed to regenerate UDP-glucose. Therefore, it positively regulates protein reglucosylation by clearing UDP from the ER lumen and by promoting the regeneration of UDP-glucose. Protein reglucosylation is essential to proper glycoprotein folding and quality control in the ER. In Ailuropoda melanoleuca (Giant panda), this protein is Ectonucleoside triphosphate diphosphohydrolase 5 (ENTPD5).